The following is a 229-amino-acid chain: Potassium/proton antiporter CemA (229 aa).

Transmembrane regions (helical) follow at residues 6–26 (AFIPFFDFTSIVFLPWLISLC), 107–127 (ILHFSTNLISFVILSGYSFWG), and 189–209 (ILSGLVSTFPVILDTIFKYWI).

It belongs to the CemA family.

It localises to the plastid. Its subcellular location is the chloroplast inner membrane. The enzyme catalyses K(+)(in) + H(+)(out) = K(+)(out) + H(+)(in). In terms of biological role, contributes to K(+)/H(+) antiport activity by supporting proton efflux to control proton extrusion and homeostasis in chloroplasts in a light-dependent manner to modulate photosynthesis. Prevents excessive induction of non-photochemical quenching (NPQ) under continuous-light conditions. Indirectly promotes efficient inorganic carbon uptake into chloroplasts. This Lepidium virginicum (Virginia pepperweed) protein is Potassium/proton antiporter CemA.